The following is a 252-amino-acid chain: Thiazole synthase (252 aa).

K98 serves as the catalytic Schiff-base intermediate with DXP. 1-deoxy-D-xylulose 5-phosphate-binding positions include G159, 185–186 (AG), and 207–208 (AS).

The protein belongs to the ThiG family. As to quaternary structure, homotetramer. Forms heterodimers with either ThiH or ThiS.

Its subcellular location is the cytoplasm. It catalyses the reaction [ThiS sulfur-carrier protein]-C-terminal-Gly-aminoethanethioate + 2-iminoacetate + 1-deoxy-D-xylulose 5-phosphate = [ThiS sulfur-carrier protein]-C-terminal Gly-Gly + 2-[(2R,5Z)-2-carboxy-4-methylthiazol-5(2H)-ylidene]ethyl phosphate + 2 H2O + H(+). It participates in cofactor biosynthesis; thiamine diphosphate biosynthesis. In terms of biological role, catalyzes the rearrangement of 1-deoxy-D-xylulose 5-phosphate (DXP) to produce the thiazole phosphate moiety of thiamine. Sulfur is provided by the thiocarboxylate moiety of the carrier protein ThiS. In vitro, sulfur can be provided by H(2)S. This Mycobacterium tuberculosis (strain ATCC 25177 / H37Ra) protein is Thiazole synthase.